A 129-amino-acid chain; its full sequence is MREKLNLLAKLKSVVYKFDPLNPNTRSIRSFIPLTTCKRSRQLAPECSISFDLGPQNTSPVIDIKFVNGTEKSIKTDTLELMSIVESIELLKKSIRIEEIEKMKTTETTLQDILQPVNKKKDTGAKANR.

The N-terminal 50 residues, 1-50, are a transit peptide targeting the mitochondrion; that stretch reads MREKLNLLAKLKSVVYKFDPLNPNTRSIRSFIPLTTCKRSRQLAPECSIS.

The protein belongs to the mitochondrion-specific ribosomal protein mL53 family.

Its subcellular location is the mitochondrion. The sequence is that of Large ribosomal subunit protein mL53 (mrpl53) from Dictyostelium discoideum (Social amoeba).